A 127-amino-acid polypeptide reads, in one-letter code: Aspartate 1-decarboxylase (127 aa).

Catalysis depends on serine 25, which acts as the Schiff-base intermediate with substrate; via pyruvic acid. Position 25 is a pyruvic acid (Ser) (serine 25). Threonine 57 is a substrate binding site. Tyrosine 58 serves as the catalytic Proton donor. Position 73-75 (73-75 (GAA)) interacts with substrate.

This sequence belongs to the PanD family. In terms of assembly, heterooctamer of four alpha and four beta subunits. Pyruvate serves as cofactor. Is synthesized initially as an inactive proenzyme, which is activated by self-cleavage at a specific serine bond to produce a beta-subunit with a hydroxyl group at its C-terminus and an alpha-subunit with a pyruvoyl group at its N-terminus.

The protein resides in the cytoplasm. The catalysed reaction is L-aspartate + H(+) = beta-alanine + CO2. It participates in cofactor biosynthesis; (R)-pantothenate biosynthesis; beta-alanine from L-aspartate: step 1/1. Functionally, catalyzes the pyruvoyl-dependent decarboxylation of aspartate to produce beta-alanine. The protein is Aspartate 1-decarboxylase of Bacillus velezensis (strain DSM 23117 / BGSC 10A6 / LMG 26770 / FZB42) (Bacillus amyloliquefaciens subsp. plantarum).